A 324-amino-acid chain; its full sequence is MTSTLIPKETSTPGGRDLRDARADYFFKLLLTAAVAFVLIALVSAALSMLWGGRQALQLQGVSFFYSTEWNPVENKYGALTPIYGTIVTALIAMLIAMPVSLGIAFFLTEVAPRWLRTPIGTAIELLAGIPSIIYGMWGLFVLVPVMTDYITPFLNDHIGTLPLIGTLFQGPPLGIGTLTAGFVLAIMVIPFISSMMREVFLTVPTQLKESAYALGSTKWEVSWNIVLPYTRSAVIGGMFLGLGRALGETMAVAFVIGNSVRLSPSLLTPGTTIAALIANDFGEATETYRSALLLLGFVLFIVTFAVLVIARLMLLRLSRKEGN.

6 consecutive transmembrane segments (helical) span residues 29–49 (LLLTAAVAFVLIALVSAALSM), 87–107 (IVTALIAMLIAMPVSLGIAFF), 126–146 (LLAGIPSIIYGMWGLFVLVPV), 173–193 (PLGIGTLTAGFVLAIMVIPFI), 235–255 (VIGGMFLGLGRALGETMAVAF), and 291–311 (SALLLLGFVLFIVTFAVLVIA). Residues 83-311 (IYGTIVTALI…IVTFAVLVIA (229 aa)) enclose the ABC transmembrane type-1 domain.

The protein belongs to the binding-protein-dependent transport system permease family. CysTW subfamily.

Its subcellular location is the cell inner membrane. Functionally, part of a binding-protein-dependent transport system for phosphate; probably responsible for the translocation of the substrate across the membrane. The protein is Phosphate transport system permease protein PstC (pstC) of Xylella fastidiosa (strain Temecula1 / ATCC 700964).